The primary structure comprises 107 residues: uncharacterized protein (107 aa).

Residues 6–107 (KARIDQLVTA…QEMLEVALAS (102 aa)) enclose the Glutaredoxin domain. Position 23 (Lys-23) interacts with glutathione. Cys-31 contacts [2Fe-2S] cluster. Residues Arg-60 and 85 to 86 (SD) contribute to the glutathione site.

Belongs to the glutaredoxin family. Monothiol subfamily.

This is an uncharacterized protein from Synechocystis sp. (strain ATCC 27184 / PCC 6803 / Kazusa).